The sequence spans 305 residues: Flagellin FlaB2 (305 aa).

The propeptide at 1–18 (MGLQKIVKKYNKKMKRKG) is propeptide.

This sequence belongs to the archaeal flagellin family. Post-translationally, glycosylated.

Its subcellular location is the archaeal flagellum. Its function is as follows. Flagellin is the subunit protein which polymerizes to form the filaments of archaeal flagella. The sequence is that of Flagellin FlaB2 from Saccharolobus shibatae (strain ATCC 51178 / DSM 5389 / JCM 8931 / NBRC 15437 / B12) (Sulfolobus shibatae).